The primary structure comprises 407 residues: Argininosuccinate synthase (407 aa).

ATP is bound by residues 16-24 (AYSGGLDTS) and alanine 44. Residues tyrosine 96 and serine 101 each coordinate L-citrulline. Glycine 126 serves as a coordination point for ATP. Residues threonine 128, asparagine 132, and aspartate 133 each contribute to the L-aspartate site. L-citrulline is bound at residue asparagine 132. Arginine 136, serine 185, serine 194, glutamate 270, and tyrosine 282 together coordinate L-citrulline.

It belongs to the argininosuccinate synthase family. Type 1 subfamily. As to quaternary structure, homotetramer.

The protein localises to the cytoplasm. The enzyme catalyses L-citrulline + L-aspartate + ATP = 2-(N(omega)-L-arginino)succinate + AMP + diphosphate + H(+). It participates in amino-acid biosynthesis; L-arginine biosynthesis; L-arginine from L-ornithine and carbamoyl phosphate: step 2/3. The chain is Argininosuccinate synthase from Shewanella loihica (strain ATCC BAA-1088 / PV-4).